We begin with the raw amino-acid sequence, 392 residues long: Formate-dependent phosphoribosylglycinamide formyltransferase (392 aa).

Residues 22-23 (EL) and E82 contribute to the N(1)-(5-phospho-beta-D-ribosyl)glycinamide site. ATP contacts are provided by residues R114, K155, 160–165 (SSGKGQ), 195–198 (EGVV), and E203. Residues 119–308 (RLAAEELQLP…EFALHVRAFL (190 aa)) form the ATP-grasp domain. Mg(2+)-binding residues include E267 and E279. N(1)-(5-phospho-beta-D-ribosyl)glycinamide is bound by residues D286, K355, and 362–363 (RR).

This sequence belongs to the PurK/PurT family. As to quaternary structure, homodimer.

It carries out the reaction N(1)-(5-phospho-beta-D-ribosyl)glycinamide + formate + ATP = N(2)-formyl-N(1)-(5-phospho-beta-D-ribosyl)glycinamide + ADP + phosphate + H(+). Its pathway is purine metabolism; IMP biosynthesis via de novo pathway; N(2)-formyl-N(1)-(5-phospho-D-ribosyl)glycinamide from N(1)-(5-phospho-D-ribosyl)glycinamide (formate route): step 1/1. Involved in the de novo purine biosynthesis. Catalyzes the transfer of formate to 5-phospho-ribosyl-glycinamide (GAR), producing 5-phospho-ribosyl-N-formylglycinamide (FGAR). Formate is provided by PurU via hydrolysis of 10-formyl-tetrahydrofolate. The protein is Formate-dependent phosphoribosylglycinamide formyltransferase of Shigella dysenteriae serotype 1 (strain Sd197).